The chain runs to 130 residues: Small ribosomal subunit protein uS11 (130 aa).

This sequence belongs to the universal ribosomal protein uS11 family. As to quaternary structure, part of the 30S ribosomal subunit. Interacts with proteins S7 and S18. Binds to IF-3.

Functionally, located on the platform of the 30S subunit, it bridges several disparate RNA helices of the 16S rRNA. Forms part of the Shine-Dalgarno cleft in the 70S ribosome. This chain is Small ribosomal subunit protein uS11, found in Ruegeria pomeroyi (strain ATCC 700808 / DSM 15171 / DSS-3) (Silicibacter pomeroyi).